We begin with the raw amino-acid sequence, 442 residues long: ATP-dependent protease ATPase subunit HslU (442 aa).

Residues isoleucine 18 and 60 to 65 contribute to the ATP site; that span reads GVGKTE. Residues 137-156 form a disordered region; it reads PKPKNDWESTETDSSSNTRQ. 3 residues coordinate ATP: aspartate 255, glutamate 320, and arginine 392.

It belongs to the ClpX chaperone family. HslU subfamily. As to quaternary structure, a double ring-shaped homohexamer of HslV is capped on each side by a ring-shaped HslU homohexamer. The assembly of the HslU/HslV complex is dependent on binding of ATP.

It localises to the cytoplasm. Functionally, ATPase subunit of a proteasome-like degradation complex; this subunit has chaperone activity. The binding of ATP and its subsequent hydrolysis by HslU are essential for unfolding of protein substrates subsequently hydrolyzed by HslV. HslU recognizes the N-terminal part of its protein substrates and unfolds these before they are guided to HslV for hydrolysis. The protein is ATP-dependent protease ATPase subunit HslU of Shewanella baltica (strain OS155 / ATCC BAA-1091).